We begin with the raw amino-acid sequence, 662 residues long: UvrABC system protein B (662 aa).

The Helicase ATP-binding domain occupies 31–188; it reads DNIEGGEKAQ…NDLVDIQFER (158 aa). ATP is bound at residue 44 to 51; the sequence is GATGTGKT. The Beta-hairpin motif lies at 97–120; it reads YYDYYQPEAYVPSSDTYIEKDSSV. The region spanning 435–601 is the Helicase C-terminal domain; sequence QIDDLLGEIN…TIKKEIRDLI (167 aa). The 36-residue stretch at 626–661 folds into the UVR domain; it reads KELVKKLEKQMQEAVEVLDFELAAQIRDMMLEVKAL.

It belongs to the UvrB family. Forms a heterotetramer with UvrA during the search for lesions. Interacts with UvrC in an incision complex.

It is found in the cytoplasm. The UvrABC repair system catalyzes the recognition and processing of DNA lesions. A damage recognition complex composed of 2 UvrA and 2 UvrB subunits scans DNA for abnormalities. Upon binding of the UvrA(2)B(2) complex to a putative damaged site, the DNA wraps around one UvrB monomer. DNA wrap is dependent on ATP binding by UvrB and probably causes local melting of the DNA helix, facilitating insertion of UvrB beta-hairpin between the DNA strands. Then UvrB probes one DNA strand for the presence of a lesion. If a lesion is found the UvrA subunits dissociate and the UvrB-DNA preincision complex is formed. This complex is subsequently bound by UvrC and the second UvrB is released. If no lesion is found, the DNA wraps around the other UvrB subunit that will check the other stand for damage. In Streptococcus pneumoniae serotype 2 (strain D39 / NCTC 7466), this protein is UvrABC system protein B.